Here is a 335-residue protein sequence, read N- to C-terminus: Foldase protein PrsA (335 aa).

The N-terminal stretch at 1-22 (MRSAKKLLSVLCLGVFILTFTA) is a signal peptide. Cys23 carries the N-palmitoyl cysteine lipid modification. Cys23 is lipidated: S-diacylglycerol cysteine. A PpiC domain is found at 194–285 (PNTMNVSHIL…FGYHIIKINS (92 aa)).

It belongs to the PrsA family.

It localises to the cell membrane. It carries out the reaction [protein]-peptidylproline (omega=180) = [protein]-peptidylproline (omega=0). Plays a major role in protein secretion by helping the post-translocational extracellular folding of several secreted proteins. The protein is Foldase protein PrsA of Clostridium botulinum (strain Loch Maree / Type A3).